The sequence spans 466 residues: 3-isopropylmalate dehydratase large subunit (466 aa).

Residues Cys-347, Cys-407, and Cys-410 each coordinate [4Fe-4S] cluster.

This sequence belongs to the aconitase/IPM isomerase family. LeuC type 1 subfamily. Heterodimer of LeuC and LeuD. It depends on [4Fe-4S] cluster as a cofactor.

The enzyme catalyses (2R,3S)-3-isopropylmalate = (2S)-2-isopropylmalate. It participates in amino-acid biosynthesis; L-leucine biosynthesis; L-leucine from 3-methyl-2-oxobutanoate: step 2/4. Its function is as follows. Catalyzes the isomerization between 2-isopropylmalate and 3-isopropylmalate, via the formation of 2-isopropylmaleate. This is 3-isopropylmalate dehydratase large subunit from Shigella boydii serotype 4 (strain Sb227).